Reading from the N-terminus, the 295-residue chain is Protoheme IX farnesyltransferase 2 (295 aa).

9 helical membrane-spanning segments follow: residues 9 to 29, 36 to 56, 83 to 103, 108 to 128, 135 to 155, 163 to 183, 209 to 229, 230 to 250, and 264 to 284; these read ITKP…FFLA, FALF…GCVF, LPLA…LLYV, LSAF…SLWL, GTLV…CAVS, VTLL…IAIF, IVLY…GGYA, GLGY…MAWG, and VFGF…VDSQ.

The protein belongs to the UbiA prenyltransferase family. Protoheme IX farnesyltransferase subfamily.

It localises to the cell inner membrane. It catalyses the reaction heme b + (2E,6E)-farnesyl diphosphate + H2O = Fe(II)-heme o + diphosphate. Its pathway is porphyrin-containing compound metabolism; heme O biosynthesis; heme O from protoheme: step 1/1. Functionally, converts heme B (protoheme IX) to heme O by substitution of the vinyl group on carbon 2 of heme B porphyrin ring with a hydroxyethyl farnesyl side group. In Pseudomonas putida (strain ATCC 47054 / DSM 6125 / CFBP 8728 / NCIMB 11950 / KT2440), this protein is Protoheme IX farnesyltransferase 2.